The sequence spans 939 residues: Translation initiation factor IF-2 (939 aa).

2 disordered regions span residues 51-81 and 137-353; these read LGTK…GGKK and VTNK…EMKA. Residues 181 to 210 show a composition bias toward basic and acidic residues; sequence NEKKAGAPEIKRAEHTETVEKSKTAVDSKK. Positions 259–277 are enriched in low complexity; sequence PVNRSPRPSTPSPNRSAGG. Over residues 300–312 the composition is skewed to basic and acidic residues; it reads RRDEKPAERDSRP. In terms of domain architecture, tr-type G spans 437–606; the sequence is GRCPVVTVMG…QLAAEMLELK (170 aa). Residues 446 to 453 form a G1 region; sequence GHVDHGKT. Residue 446–453 participates in GTP binding; sequence GHVDHGKT. Residues 471-475 form a G2 region; it reads GITQH. Residues 492–495 form a G3 region; it reads DTPG. GTP-binding positions include 492–496 and 546–549; these read DTPGH and NKID. Positions 546–549 are G4; it reads NKID. Residues 582–584 form a G5 region; the sequence is SAK.

Belongs to the TRAFAC class translation factor GTPase superfamily. Classic translation factor GTPase family. IF-2 subfamily.

The protein resides in the cytoplasm. Functionally, one of the essential components for the initiation of protein synthesis. Protects formylmethionyl-tRNA from spontaneous hydrolysis and promotes its binding to the 30S ribosomal subunits. Also involved in the hydrolysis of GTP during the formation of the 70S ribosomal complex. The protein is Translation initiation factor IF-2 of Desulfotalea psychrophila (strain LSv54 / DSM 12343).